Reading from the N-terminus, the 70-residue chain is U-scoloptoxin(04)-Er3a (70 aa).

The N-terminal stretch at methionine 1–alanine 24 is a signal peptide.

The protein belongs to the scoloptoxin-04 family. Post-translationally, contains 2 disulfide bonds. In terms of tissue distribution, expressed by the venom gland.

The protein resides in the secreted. This Ethmostigmus rubripes (Giant centipede) protein is U-scoloptoxin(04)-Er3a.